The following is a 324-amino-acid chain: Pyruvate synthase subunit PorB (324 aa).

The [4Fe-4S] cluster site is built by C26, C29, and C57. Residues 150–172 form a disordered region; the sequence is TGNQRSGSTPPGSDTTTAPVGKK. The span at 155–166 shows a compositional bias: low complexity; the sequence is SGSTPPGSDTTT. [4Fe-4S] cluster is bound at residue C228.

As to quaternary structure, heterotetramer of one alpha, one beta, one delta and one gamma chain. [4Fe-4S] cluster is required as a cofactor.

The enzyme catalyses 2 oxidized [2Fe-2S]-[ferredoxin] + pyruvate + CoA = 2 reduced [2Fe-2S]-[ferredoxin] + acetyl-CoA + CO2 + H(+). This Thermotoga maritima (strain ATCC 43589 / DSM 3109 / JCM 10099 / NBRC 100826 / MSB8) protein is Pyruvate synthase subunit PorB (porB).